We begin with the raw amino-acid sequence, 652 residues long: Bifunctional protein ThiO/ThiG (652 aa).

Residues 1-366 (MTRDIVIIGG…HYSRFQKQAS (366 aa)) are thiO. FAD contacts are provided by residues 5–19 (IVII…AIAV) and 44–46 (AGM). Glutamate 52 lines the glycine pocket. Residue valine 173 coordinates FAD. Arginine 301 and arginine 327 together coordinate glycine. 325 to 331 (HYRNGIL) is a binding site for FAD. The tract at residues 393–652 (SLIIAGKSFH…ASSPVTGTIS (260 aa)) is thiG. Lysine 494 (schiff-base intermediate with DXP) is an active-site residue. Residues glycine 555, 581-582 (AG), and 603-604 (NS) contribute to the 1-deoxy-D-xylulose 5-phosphate site.

This sequence in the N-terminal section; belongs to the DAO family. ThiO subfamily. In the C-terminal section; belongs to the ThiG family. In terms of assembly, interacts with ThiH and ThiS. FAD is required as a cofactor.

It is found in the cytoplasm. It carries out the reaction glycine + O2 + H2O = glyoxylate + H2O2 + NH4(+). The enzyme catalyses [ThiS sulfur-carrier protein]-C-terminal-Gly-aminoethanethioate + 2-iminoacetate + 1-deoxy-D-xylulose 5-phosphate = [ThiS sulfur-carrier protein]-C-terminal Gly-Gly + 2-[(2R,5Z)-2-carboxy-4-methylthiazol-5(2H)-ylidene]ethyl phosphate + 2 H2O + H(+). The protein operates within cofactor biosynthesis; thiamine diphosphate biosynthesis. Catalyzes the FAD-dependent oxidative deamination of glycine. Is essential for thiamine biosynthesis since the oxidation of glycine catalyzed by ThiO generates the glycine imine intermediate (dehydroglycine) required for the biosynthesis of the thiazole ring of thiamine pyrophosphate. Functionally, catalyzes the rearrangement of 1-deoxy-D-xylulose 5-phosphate (DXP) to produce the thiazole phosphate moiety of thiamine. Sulfur is provided by the thiocarboxylate moiety of the carrier protein ThiS. In vitro, sulfur can be provided by H(2)S. This chain is Bifunctional protein ThiO/ThiG (thiO/thiG), found in Trichormus variabilis (strain ATCC 29413 / PCC 7937) (Anabaena variabilis).